A 665-amino-acid polypeptide reads, in one-letter code: Dual specificity protein phosphatase 16 (665 aa).

The region spanning 22 to 137 is the Rhodanese domain; sequence GTEKVLLIDS…FSRCFPGLCE (116 aa). Position 55 is a (Microbial infection) N6-acetyllysine; by EIS (Lys-55). The Tyrosine-protein phosphatase domain maps to 158–300; it reads GPTRILPNLY…LLDYEKKIKN (143 aa). The active-site Phosphocysteine intermediate is Cys-244. The disordered stretch occupies residues 321-368; sequence EPVPAVSEGGQKSETPLSPPCADSATSEAAGQRPVHPASVPSVPSVQP. Residues 354-368 show a composition bias toward low complexity; the sequence is PVHPASVPSVPSVQP. Ser-446 carries the post-translational modification Phosphoserine; by MAPK1. Composition is skewed to polar residues over residues 449–458 and 487–499; these read QELSEQTPET and VRTS…QRSL. 2 disordered regions span residues 449 to 505 and 597 to 665; these read QELS…PLHR and VRRR…IEVS. Ser-501 is subject to Phosphoserine. The segment covering 602-622 has biased composition (basic and acidic residues); the sequence is KPSDRADSRRSWHEESPFEKQ.

The protein belongs to the protein-tyrosine phosphatase family. Non-receptor class dual specificity subfamily. In terms of assembly, interacts with ARRB2. In terms of processing, phosphorylated at Ser-446 by MAPK1/ERK2, which prevents its degradation, and thereby stabilizes it and blocks JNK MAPK activity. (Microbial infection) Acetylated at Lys-55 by the M.tuberculosis Eis protein; this leads to the inhibition of JNK-dependent autophagy, phagosome maturation, and ROS (reactive oxygen species) generation for enhanced intracellular survival of M.tuberculosis.

Its subcellular location is the cytoplasm. The protein resides in the nucleus. It is found in the cytoplasmic vesicle. The catalysed reaction is O-phospho-L-tyrosyl-[protein] + H2O = L-tyrosyl-[protein] + phosphate. It catalyses the reaction O-phospho-L-seryl-[protein] + H2O = L-seryl-[protein] + phosphate. The enzyme catalyses O-phospho-L-threonyl-[protein] + H2O = L-threonyl-[protein] + phosphate. Dual specificity protein phosphatase involved in the inactivation of MAP kinases. Dephosphorylates MAPK10 bound to ARRB2. This is Dual specificity protein phosphatase 16 (DUSP16) from Homo sapiens (Human).